A 110-amino-acid polypeptide reads, in one-letter code: MTTEDHSYKDKKVISIGIVSELTGLSVRQIRYYEERKLIYPQRSSRGTRKYSFADVERLMDIANKREDGVQTAEILKDMRKKEQMLKNDPQVRKKMLEGQLNAHFRYKNR.

In terms of domain architecture, HTH merR-type spans Val-13–Lys-81. Residues Ile-16 to Glu-35 constitute a DNA-binding region (H-T-H motif).

Homodimer. Under conditions of nitrogen excess, TnrA forms a stable complex with feedback-inhibited GlnA. Interacts with GlnK-AmtB complex.

The protein localises to the cell membrane. Under conditions of nitrogen excess, the DNA-binding activity is inhibited by the formation of a stable complex with feedback-inhibited GlnA. The presence of glutamine and AMP increases the inhibitory activity of glutamine synthetase by more than 1000-fold. Its function is as follows. Transcription regulator that actives the transcription of genes required for nitrogen assimilation such as nrgAB (ammonium transport), nasABCDEF (nitrate/nitrite assimilation), ureABC (urea degradation) and gabP (GABA transport), during nitrogen limitation. Also represses glnRA and gltAB in the absence of ammonium. On the contrary of the MerR members, which require longer DNA sites for high-affinity binding, TnrA requires a DNA sequence of 17 nucleotides as minimal binding site. In Bacillus subtilis (strain 168), this protein is HTH-type transcriptional regulator TnrA.